The chain runs to 208 residues: Uracil phosphoribosyltransferase (208 aa).

5-phospho-alpha-D-ribose 1-diphosphate contacts are provided by residues Arg-78, Arg-103, and 130–138 (DPMLATGGS). Residues Ile-193 and 198–200 (GDA) contribute to the uracil site. Asp-199 is a 5-phospho-alpha-D-ribose 1-diphosphate binding site.

The protein belongs to the UPRTase family. The cofactor is Mg(2+).

The catalysed reaction is UMP + diphosphate = 5-phospho-alpha-D-ribose 1-diphosphate + uracil. It participates in pyrimidine metabolism; UMP biosynthesis via salvage pathway; UMP from uracil: step 1/1. Allosterically activated by GTP. Functionally, catalyzes the conversion of uracil and 5-phospho-alpha-D-ribose 1-diphosphate (PRPP) to UMP and diphosphate. The sequence is that of Uracil phosphoribosyltransferase from Acholeplasma laidlawii (strain PG-8A).